We begin with the raw amino-acid sequence, 93 residues long: MSRSTKKGPFVHARLLKKIEAMNASGNKEVIKTWSRSSTVFPQMVENTIAVHDGRKHVPVYITEDMVGHKLGEFVPTRTFKGHKDDEKSNKRK.

It belongs to the universal ribosomal protein uS19 family.

In terms of biological role, protein S19 forms a complex with S13 that binds strongly to the 16S ribosomal RNA. This chain is Small ribosomal subunit protein uS19, found in Clostridioides difficile (strain 630) (Peptoclostridium difficile).